The primary structure comprises 569 residues: Rab GTPase-binding effector protein 2 (569 aa).

3 disordered regions span residues 1-41, 180-265, and 388-411; these read MAAA…GELS, IQRR…ETAS, and RAEQLPSSAPQGSQQEQGEEESLP. N-acetylalanine is present on Ala2. The stretch at 34–187 forms a coiled coil; it reads EAESGELSRL…QEIQRRPRHA (154 aa). Phosphoserine is present on residues Ser189 and Ser193. Phosphoserine; by GSK3-alpha is present on Ser200. Ser204 is subject to Phosphoserine. 2 stretches are compositionally biased toward low complexity: residues 245–257 and 393–403; these read SSSSLPQSRQGLS and PSSAPQGSQQE. The stretch at 289-523 forms a coiled coil; the sequence is DTQWEQLQTE…LQAELETSEQ (235 aa).

This sequence belongs to the rabaptin family. As to quaternary structure, heterodimer with RABGEF1. The dimer binds RAB5A that has been activated by GTP-binding. Interacts with SDCCAG8; this interaction is important for ciliogenesis regulation. Interacts with RAB4A; this interaction may mediate VEGFR2 cell surface expression.

It is found in the cytoplasm. It localises to the early endosome. The protein resides in the cytoskeleton. Its subcellular location is the microtubule organizing center. The protein localises to the centrosome. It is found in the cilium basal body. Functionally, plays a role in membrane trafficking and in homotypic early endosome fusion. Participates in arteriogenesis by regulating vascular endothelial growth factor receptor 2/VEGFR2 cell surface expression and endosomal trafficking. By interacting with SDCCAG8, localizes to centrosomes and plays a critical role in ciliogenesis. The chain is Rab GTPase-binding effector protein 2 (RABEP2) from Homo sapiens (Human).